We begin with the raw amino-acid sequence, 228 residues long: Sugar fermentation stimulation protein homolog (228 aa).

This sequence belongs to the SfsA family.

The polypeptide is Sugar fermentation stimulation protein homolog (Psychromonas ingrahamii (strain DSM 17664 / CCUG 51855 / 37)).